Here is a 657-residue protein sequence, read N- to C-terminus: N-acetylgalactosaminyltransferase 7 (657 aa).

Residues 1-6 (MRLKIG) lie on the Cytoplasmic side of the membrane. Residues 7-29 (FILRSLLVVGSFLGLVVLWSSLS) form a helical; Signal-anchor for type II membrane protein membrane-spanning segment. Disordered regions lie at residues 30–66 (SRPD…DDRF) and 83–105 (ESIR…DSQR). Residues 30 to 657 (SRPDDQSPLS…KWEMNNIHSV (628 aa)) lie on the Lumenal side of the membrane. Intrachain disulfides connect Cys-197/Cys-435, Cys-426/Cys-507, Cys-545/Cys-562, Cys-585/Cys-600, and Cys-625/Cys-640. Residues 206-317 (LLTSSVVIVF…VNWYAPLVAP (112 aa)) are catalytic subdomain A. Positions 247 and 277 each coordinate substrate. Residues Asp-301 and His-303 each coordinate Mn(2+). The catalytic subdomain B stretch occupies residues 381 to 443 (PYRSPAMAGG…PCSRVGHIYR (63 aa)). Trp-412 provides a ligand contact to substrate. His-440 is a Mn(2+) binding site. Arg-443 lines the substrate pocket. The Ricin B-type lectin domain maps to 532 to 652 (VEWGEIRGLE…SKMTQKWEMN (121 aa)).

Belongs to the glycosyltransferase 2 family. GalNAc-T subfamily. Requires Mn(2+) as cofactor. In terms of tissue distribution, highly expressed in sublingual gland. Expressed at lower level in stomach, small intestiine and colon.

The protein resides in the golgi apparatus membrane. It catalyses the reaction L-seryl-[protein] + UDP-N-acetyl-alpha-D-galactosamine = a 3-O-[N-acetyl-alpha-D-galactosaminyl]-L-seryl-[protein] + UDP + H(+). The catalysed reaction is L-threonyl-[protein] + UDP-N-acetyl-alpha-D-galactosamine = a 3-O-[N-acetyl-alpha-D-galactosaminyl]-L-threonyl-[protein] + UDP + H(+). It functions in the pathway protein modification; protein glycosylation. Glycopeptide transferase involved in O-linked oligosaccharide biosynthesis, which catalyzes the transfer of an N-acetyl-D-galactosamine residue to an already glycosylated peptide. In contrast to other proteins of the family, it does not act as a peptide transferase that transfers GalNAc onto serine or threonine residue on the protein receptor, but instead requires the prior addition of a GalNAc on a peptide before adding additional GalNAc moieties. Some peptide transferase activity is however not excluded, considering that its appropriate peptide substrate may remain unidentified. This is N-acetylgalactosaminyltransferase 7 (Galnt7) from Mus musculus (Mouse).